Consider the following 278-residue polypeptide: Phosphate import ATP-binding protein PstB (278 aa).

In terms of domain architecture, ABC transporter spans Tyr-32–Ile-273. Gly-64 to Ser-71 is a binding site for ATP.

It belongs to the ABC transporter superfamily. Phosphate importer (TC 3.A.1.7) family. The complex is composed of two ATP-binding proteins (PstB), two transmembrane proteins (PstC and PstA) and a solute-binding protein (PstS).

The protein localises to the cell membrane. It carries out the reaction phosphate(out) + ATP + H2O = ADP + 2 phosphate(in) + H(+). In terms of biological role, part of the ABC transporter complex PstSACB involved in phosphate import. Responsible for energy coupling to the transport system. This chain is Phosphate import ATP-binding protein PstB, found in Halalkalibacterium halodurans (strain ATCC BAA-125 / DSM 18197 / FERM 7344 / JCM 9153 / C-125) (Bacillus halodurans).